An 823-amino-acid polypeptide reads, in one-letter code: Leucine--tRNA ligase (823 aa).

Positions proline 55–histidine 65 match the 'HIGH' region motif. Residues lysine 590–serine 594 carry the 'KMSKS' region motif. Lysine 593 contributes to the ATP binding site.

It belongs to the class-I aminoacyl-tRNA synthetase family.

Its subcellular location is the cytoplasm. It carries out the reaction tRNA(Leu) + L-leucine + ATP = L-leucyl-tRNA(Leu) + AMP + diphosphate. This chain is Leucine--tRNA ligase, found in Deinococcus radiodurans (strain ATCC 13939 / DSM 20539 / JCM 16871 / CCUG 27074 / LMG 4051 / NBRC 15346 / NCIMB 9279 / VKM B-1422 / R1).